The chain runs to 300 residues: DNA repair protein PprA (300 aa).

Threonine 88 is modified (phosphothreonine). Serine 128 bears the Phosphoserine mark. Phosphothreonine is present on threonine 160.

In terms of processing, phosphorylated by RqkA in vitro. Phosphorylated primarily at Thr-88, and to a little extent at Ser-128 and Thr-160.

Phosphorylation increases DNA binding affinity. Functionally, dsDNA-binding protein that contributes to the ionizing radiation resistance of D.radiodurans. Plays a role in DNA repair and genome reconstitution, and is necessary for recovery from severe genomic fragmentation as a result of exposure to severe levels of ionizing radiation. In vitro, binds to double-stranded DNA carrying strand breaks and stimulates the DNA end-joining reaction catalyzed by DNA ligases. Thus, PprA plays a critical role in a non-homologous end-joining (NHEJ) pathway for the repair of radiation-induced DNA double-strands breaks. Cannot bind to dsDNA without strand breaks or single-stranded DNA. The chain is DNA repair protein PprA (pprA) from Deinococcus radiodurans (strain ATCC 13939 / DSM 20539 / JCM 16871 / CCUG 27074 / LMG 4051 / NBRC 15346 / NCIMB 9279 / VKM B-1422 / R1).